The primary structure comprises 144 residues: Large ribosomal subunit protein uL16 (144 aa).

Positions Met1 to Arg14 are enriched in basic residues. Positions Met1 to Asn25 are disordered.

It belongs to the universal ribosomal protein uL16 family. In terms of assembly, part of the 50S ribosomal subunit.

Its function is as follows. Binds 23S rRNA and is also seen to make contacts with the A and possibly P site tRNAs. The chain is Large ribosomal subunit protein uL16 from Moorella thermoacetica (strain ATCC 39073 / JCM 9320).